Consider the following 120-residue polypeptide: uncharacterized protein (120 aa).

This is an uncharacterized protein from Dictyostelium discoideum (Social amoeba).